Here is a 430-residue protein sequence, read N- to C-terminus: Histidine--tRNA ligase (430 aa).

The protein belongs to the class-II aminoacyl-tRNA synthetase family. Homodimer.

Its subcellular location is the cytoplasm. The catalysed reaction is tRNA(His) + L-histidine + ATP = L-histidyl-tRNA(His) + AMP + diphosphate + H(+). This chain is Histidine--tRNA ligase, found in Anaplasma marginale (strain Florida).